The primary structure comprises 273 residues: 5-deoxy-glucuronate isomerase (273 aa).

Belongs to the isomerase IolB family.

It carries out the reaction 5-deoxy-D-glucuronate = 5-dehydro-2-deoxy-D-gluconate. Its pathway is polyol metabolism; myo-inositol degradation into acetyl-CoA; acetyl-CoA from myo-inositol: step 4/7. Functionally, involved in the isomerization of 5-deoxy-glucuronate (5DG) to 5-dehydro-2-deoxy-D-gluconate (DKG or 2-deoxy-5-keto-D-gluconate). The chain is 5-deoxy-glucuronate isomerase from Listeria innocua serovar 6a (strain ATCC BAA-680 / CLIP 11262).